The following is a 278-amino-acid chain: Probable septum site-determining protein MinC (278 aa).

The disordered stretch occupies residues 104–167 (RTQQSVDPAP…ASHTPAAPQS (64 aa)).

This sequence belongs to the MinC family. Interacts with MinD and FtsZ.

Its function is as follows. Cell division inhibitor that blocks the formation of polar Z ring septums. Rapidly oscillates between the poles of the cell to destabilize FtsZ filaments that have formed before they mature into polar Z rings. Prevents FtsZ polymerization. The protein is Probable septum site-determining protein MinC of Bordetella avium (strain 197N).